Reading from the N-terminus, the 387-residue chain is S-adenosylmethionine synthase (387 aa).

H19 provides a ligand contact to ATP. D21 is a Mg(2+) binding site. E47 contributes to the K(+) binding site. L-methionine is bound at residue Q103. The interval 103–113 (QSPDIAQGVEL) is flexible loop. ATP is bound by residues 167 to 169 (DMK), 233 to 234 (RF), D242, 248 to 249 (RK), A265, and K269. D242 lines the L-methionine pocket. Position 273 (K273) interacts with L-methionine.

It belongs to the AdoMet synthase family. In terms of assembly, homotetramer; dimer of dimers. The cofactor is Mg(2+). Requires K(+) as cofactor.

The protein localises to the cytoplasm. It catalyses the reaction L-methionine + ATP + H2O = S-adenosyl-L-methionine + phosphate + diphosphate. Its pathway is amino-acid biosynthesis; S-adenosyl-L-methionine biosynthesis; S-adenosyl-L-methionine from L-methionine: step 1/1. In terms of biological role, catalyzes the formation of S-adenosylmethionine (AdoMet) from methionine and ATP. The overall synthetic reaction is composed of two sequential steps, AdoMet formation and the subsequent tripolyphosphate hydrolysis which occurs prior to release of AdoMet from the enzyme. In Mycoplasma capricolum subsp. capricolum (strain California kid / ATCC 27343 / NCTC 10154), this protein is S-adenosylmethionine synthase.